We begin with the raw amino-acid sequence, 110 residues long: Parvalbumin alpha (110 aa).

S2 bears the N-acetylserine mark. A phosphoserine mark is found at S2 and S24. 2 consecutive EF-hand domains span residues 39-74 (KSAD…FSPD) and 78-110 (LSAK…VAES). Positions 52, 54, 56, 58, 60, 63, 91, 93, 95, 97, and 102 each coordinate Ca(2+).

Belongs to the parvalbumin family.

In terms of biological role, in muscle, parvalbumin is thought to be involved in relaxation after contraction. It binds two calcium ions. The protein is Parvalbumin alpha (PVALB) of Macaca fuscata fuscata (Japanese macaque).